Here is a 603-residue protein sequence, read N- to C-terminus: UvrABC system protein C (603 aa).

Residues 17–94 form the GIY-YIG domain; sequence TTSGCYKMLN…IKTHKPDYNV (78 aa).

It belongs to the UvrC family. Interacts with UvrB in an incision complex.

The protein resides in the cytoplasm. Functionally, the UvrABC repair system catalyzes the recognition and processing of DNA lesions. UvrC both incises the 5' and 3' sides of the lesion. The N-terminal half is responsible for the 3' incision and the C-terminal half is responsible for the 5' incision. This chain is UvrABC system protein C, found in Borreliella burgdorferi (strain ATCC 35210 / DSM 4680 / CIP 102532 / B31) (Borrelia burgdorferi).